Here is a 263-residue protein sequence, read N- to C-terminus: Calpain small subunit 1 (263 aa).

Met1 is modified (N-acetylmethionine). Residue Ser6 is modified to Phosphoserine. Residues 91–125 (EEVRQFRRLFAQLAGDDMEVSATELMNILNKVVTR) form the EF-hand 1; atypical domain. The Ca(2+) site is built by Ala104, Asp107, Glu109, Glu114, Asp132, Asp147, Asp149, Thr151, Lys153, and Glu158. EF-hand domains are found at residues 134 to 167 (FGID…NNIK), 164 to 199 (NNIK…AGFR), 200 to 228 (LNEH…ISCL), and 229 to 263 (VRLD…TMYS). Lys174 bears the N6-acetyllysine mark. Ca(2+)-binding residues include Asp177, Asp179, Ser181, Thr183, Glu188, and Asp220.

As to quaternary structure, homodimer or heterodimer of a large (catalytic) and a small (regulatory) subunit. In presence of calcium, the heterodimer dissociates.

It localises to the cytoplasm. It is found in the cell membrane. Its function is as follows. Regulatory subunit of the calcium-regulated non-lysosomal thiol-protease which catalyzes limited proteolysis of substrates involved in cytoskeletal remodeling and signal transduction. Essential for embryonic development. The protein is Calpain small subunit 1 (CAPNS1) of Bos taurus (Bovine).